A 175-amino-acid polypeptide reads, in one-letter code: MTKVNSQKYSKALLEVAQEKGQLEAILSEVSEMIQLFKEDNLVAFLSSEVYSFSAKSELIDTLLQTSSEVMSNFLNTVRSNGRLGDLGEILDETKNAADDMFKIADVGVVSSIALTNAQIEKFTAMAKAKFDLNEVTVINTVNEKILGGFIVNSRGKIIDASLKTQLAKIAAEIL.

It belongs to the ATPase delta chain family. In terms of assembly, F-type ATPases have 2 components, F(1) - the catalytic core - and F(0) - the membrane proton channel. F(1) has five subunits: alpha(3), beta(3), gamma(1), delta(1), epsilon(1). F(0) has three main subunits: a(1), b(2) and c(10-14). The alpha and beta chains form an alternating ring which encloses part of the gamma chain. F(1) is attached to F(0) by a central stalk formed by the gamma and epsilon chains, while a peripheral stalk is formed by the delta and b chains.

The protein localises to the cell membrane. Its function is as follows. F(1)F(0) ATP synthase produces ATP from ADP in the presence of a proton or sodium gradient. F-type ATPases consist of two structural domains, F(1) containing the extramembraneous catalytic core and F(0) containing the membrane proton channel, linked together by a central stalk and a peripheral stalk. During catalysis, ATP synthesis in the catalytic domain of F(1) is coupled via a rotary mechanism of the central stalk subunits to proton translocation. In terms of biological role, this protein is part of the stalk that links CF(0) to CF(1). It either transmits conformational changes from CF(0) to CF(1) or is implicated in proton conduction. The protein is ATP synthase subunit delta of Lactococcus lactis subsp. lactis (strain IL1403) (Streptococcus lactis).